A 329-amino-acid polypeptide reads, in one-letter code: tRNA-modifying protein YgfZ (329 aa).

Residues W27 and W189 each contribute to the folate site.

Belongs to the tRNA-modifying YgfZ family.

The protein resides in the cytoplasm. In terms of biological role, folate-binding protein involved in regulating the level of ATP-DnaA and in the modification of some tRNAs. It is probably a key factor in regulatory networks that act via tRNA modification, such as initiation of chromosomal replication. The chain is tRNA-modifying protein YgfZ from Cronobacter sakazakii (strain ATCC BAA-894) (Enterobacter sakazakii).